The chain runs to 327 residues: cAMP-dependent protein kinase regulatory subunit (327 aa).

The tract at residues 1–47 (MTNNISHNQKATEKVEAQNNNNITRKRRGAISSEPLGDKPATPLPNI) is disordered. The tract at residues 1–65 (MTNNISHNQK…RLEQALSNNI (65 aa)) is dimerization and phosphorylation. Positions 27 to 31 (RRGAI) match the Pseudophosphorylation motif motif. Position 32 is a phosphoserine (Ser-32). Residues 66–188 (MFSH…EKVS), Glu-136, Arg-145, 189–327 (ILRH…SQKS), Glu-262, and Arg-271 each bind 3',5'-cyclic AMP.

This sequence belongs to the cAMP-dependent kinase regulatory chain family. In Dictyostelium the holoenzyme is a dimer composed of a regulatory (R) and a catalytic (C) subunit. In the presence of cAMP it dissociates into the active C subunit and an R monomer. In other eukaryotes the holoenzyme is a tetramer composed of 2 regulatory (R) and 2 catalytic (C) subunits. In the presence of cAMP it dissociates into active monomeric C subunits and an R dimer. The pseudophosphorylation site binds to the substrate-binding region of the catalytic chain but is not phosphorylated. The physiological significance of phosphorylations by other kinases is unclear.

The chain is cAMP-dependent protein kinase regulatory subunit (pkaR) from Dictyostelium discoideum (Social amoeba).